Reading from the N-terminus, the 192-residue chain is Fe/S biogenesis protein NfuA (192 aa).

The [4Fe-4S] cluster site is built by Cys-150 and Cys-153.

It belongs to the NfuA family. Homodimer. Requires [4Fe-4S] cluster as cofactor.

Functionally, involved in iron-sulfur cluster biogenesis. Binds a 4Fe-4S cluster, can transfer this cluster to apoproteins, and thereby intervenes in the maturation of Fe/S proteins. Could also act as a scaffold/chaperone for damaged Fe/S proteins. This Buchnera aphidicola subsp. Acyrthosiphon pisum (strain APS) (Acyrthosiphon pisum symbiotic bacterium) protein is Fe/S biogenesis protein NfuA.